A 320-amino-acid polypeptide reads, in one-letter code: tRNA dimethylallyltransferase (320 aa).

17–24 (GPTAVGKT) is a binding site for ATP. 19-24 (TAVGKT) lines the substrate pocket. Residues 42–45 (DSMQ) form an interaction with substrate tRNA region.

The protein belongs to the IPP transferase family. Monomer. Requires Mg(2+) as cofactor.

The enzyme catalyses adenosine(37) in tRNA + dimethylallyl diphosphate = N(6)-dimethylallyladenosine(37) in tRNA + diphosphate. In terms of biological role, catalyzes the transfer of a dimethylallyl group onto the adenine at position 37 in tRNAs that read codons beginning with uridine, leading to the formation of N6-(dimethylallyl)adenosine (i(6)A). This chain is tRNA dimethylallyltransferase, found in Bacillus thuringiensis (strain Al Hakam).